A 467-amino-acid chain; its full sequence is Uronate isomerase (467 aa).

This sequence belongs to the metallo-dependent hydrolases superfamily. Uronate isomerase family.

The enzyme catalyses D-glucuronate = D-fructuronate. The catalysed reaction is aldehydo-D-galacturonate = keto-D-tagaturonate. Its pathway is carbohydrate metabolism; pentose and glucuronate interconversion. In Actinobacillus succinogenes (strain ATCC 55618 / DSM 22257 / CCUG 43843 / 130Z), this protein is Uronate isomerase.